The following is a 414-amino-acid chain: 2,3-diketo-5-methylthiopentyl-1-phosphate enolase (414 aa).

Lysine 99 (proton acceptor) is an active-site residue. Substrate is bound by residues lysine 148, 174–177, histidine 265, glycine 338, and 360–361; these read KDDE and GG. Mg(2+)-binding residues include lysine 174, aspartate 176, and glutamate 177. Lysine 174 carries the post-translational modification N6-carboxylysine.

The protein belongs to the RuBisCO large chain family. Type IV subfamily. In terms of assembly, homodimer. Mg(2+) serves as cofactor.

The enzyme catalyses 5-methylsulfanyl-2,3-dioxopentyl phosphate = 2-hydroxy-5-methylsulfanyl-3-oxopent-1-enyl phosphate. The protein operates within amino-acid biosynthesis; L-methionine biosynthesis via salvage pathway; L-methionine from S-methyl-5-thio-alpha-D-ribose 1-phosphate: step 3/6. Its function is as follows. Catalyzes the enolization of 2,3-diketo-5-methylthiopentyl-1-phosphate (DK-MTP-1-P) into 2-hydroxy-3-keto-5-methylthiopentenyl-1-phosphate (HK-MTPenyl-1-P). The protein is 2,3-diketo-5-methylthiopentyl-1-phosphate enolase of Bacillus anthracis (strain CDC 684 / NRRL 3495).